The following is a 296-amino-acid chain: Putative S-adenosyl-L-methionine-dependent methyltransferase MAV_4764 (296 aa).

S-adenosyl-L-methionine contacts are provided by residues Asp121 and 150-151; that span reads DL.

Belongs to the UPF0677 family.

In terms of biological role, exhibits S-adenosyl-L-methionine-dependent methyltransferase activity. This chain is Putative S-adenosyl-L-methionine-dependent methyltransferase MAV_4764, found in Mycobacterium avium (strain 104).